The following is a 328-amino-acid chain: Peroxidase 59 (328 aa).

The signal sequence occupies residues 1-28 (MKTQTKVMGGHVLLTVFTLCMLCSGVRA). Pyrrolidone carboxylic acid is present on Q29. 4 disulfides stabilise this stretch: C39–C116, C72–C77, C122–C323, and C200–C232. Residue H70 is the Proton acceptor of the active site. 5 residues coordinate Ca(2+): D71, V74, G76, D78, and S80. Residue P163 participates in substrate binding. N-linked (GlcNAc...) asparagine glycosylation occurs at N182. Residue H193 coordinates heme b. A Ca(2+)-binding site is contributed by T194. 2 N-linked (GlcNAc...) asparagine glycosylation sites follow: N209 and N239. Residues D245, T248, T251, and D253 each contribute to the Ca(2+) site. N-linked (GlcNAc...) asparagine glycosylation is found at N281 and N310.

The protein belongs to the peroxidase family. Classical plant (class III) peroxidase subfamily. The cofactor is heme b. It depends on Ca(2+) as a cofactor. In terms of tissue distribution, slightly expressed in roots.

The protein localises to the secreted. The catalysed reaction is 2 a phenolic donor + H2O2 = 2 a phenolic radical donor + 2 H2O. Its function is as follows. Removal of H(2)O(2), oxidation of toxic reductants, biosynthesis and degradation of lignin, suberization, auxin catabolism, response to environmental stresses such as wounding, pathogen attack and oxidative stress. These functions might be dependent on each isozyme/isoform in each plant tissue. The protein is Peroxidase 59 (PER59) of Arabidopsis thaliana (Mouse-ear cress).